The primary structure comprises 322 residues: Serine/threonine-protein phosphatase PP1-2 (322 aa).

Mn(2+) contacts are provided by aspartate 60, histidine 62, aspartate 88, and asparagine 120. The active-site Proton donor is the histidine 121. Mn(2+)-binding residues include histidine 169 and histidine 244. The disordered stretch occupies residues arginine 298–asparagine 322. Polar residues predominate over residues valine 301–leucine 316.

This sequence belongs to the PPP phosphatase family. PP-1 subfamily. The cofactor is Mn(2+).

The enzyme catalyses O-phospho-L-seryl-[protein] + H2O = L-seryl-[protein] + phosphate. It catalyses the reaction O-phospho-L-threonyl-[protein] + H2O = L-threonyl-[protein] + phosphate. In terms of biological role, essential role in cell cycle control. PP1 is perhaps required for exit from mitosis. The sequence is that of Serine/threonine-protein phosphatase PP1-2 (sds21) from Schizosaccharomyces pombe (strain 972 / ATCC 24843) (Fission yeast).